An 853-amino-acid polypeptide reads, in one-letter code: MEYNFTTIEKKWQKFWKDNQSFKTVSKPTDKKYYVLEMFPYPSGKMHMGHVSNYTIADSIARYYKLLGYDILHPMGWDAFGMPAENAAIEHKTHPAEWTLKNIANMKDQLNLLGYSYDWDREVTTCLPDYYKWGQWFILKMYEKGLLYRKGGDVNWCDHCNTVLANEQVTPEGTCWRCDGEVTKKKLEQWYIKVTDYAEQLDADLKLLEGYWPDNVIAMQKNWIGRSVGAYINFNLDDGKAFPIFTTRPDTIYGVTYMAIAWNYDGLLDMCTTEQKSAVEEFIKKSAKIDQKTDYEKEGVFTGRYVVNPFNGEKAPLYAANFVLAEYGSGAVMAVPAHDQRDFEFAKKYNIPVKVVIQNADNSLKAENMTEAYTEDGTVVNSDILNGLSSRDAIKRAIEYATEKGFGKEKVQYKLRDWLISRQRYWGNPLPFVHCEKCGVVPVPESELPITLPMDIEFTVGDNPLKKSESFVNTTCPKCGGKARRETDTMDTFTCSSWYYARYTDAHNNQMPFDPSAANAWLGVDQYIGGIEHACMHLLYSRFWYKFMRDIGLVKGDEPFNRLLTQGMVLANSYESRELKKFYTQEQMNNKEYEKDGIKKEDIIVKMEKMSKSKANGIDPAEIIELFGADAVRIFVMFVAPPEKDKEWSDEGVKGSSRFLNRIWNLFLKYKDEEAFKNGKSFDYNNLSKEGQKLFRKYNKTIKKVTIDIKDRFHFNTAIAALMELLNDMSVIKLANNDDYAMFKEVIRGYLILLNPIAPHMTEELYQILNFGKMILEERWVEHDEQYCKDDTFELVFQVNGKIRDRVEADVNISEDDAKAQALASEKVKAFTDGKNIVKVVYVKGKLVNIVVK.

Positions 40 to 50 match the 'HIGH' region motif; that stretch reads PYPSGKMHMGH. Residues 609 to 613 carry the 'KMSKS' region motif; sequence KMSKS. Residue lysine 612 coordinates ATP.

Belongs to the class-I aminoacyl-tRNA synthetase family.

Its subcellular location is the cytoplasm. It carries out the reaction tRNA(Leu) + L-leucine + ATP = L-leucyl-tRNA(Leu) + AMP + diphosphate. In Brachyspira hyodysenteriae (strain ATCC 49526 / WA1), this protein is Leucine--tRNA ligase.